The sequence spans 360 residues: Peptide chain release factor 1 (360 aa).

Gln-235 carries the post-translational modification N5-methylglutamine.

Belongs to the prokaryotic/mitochondrial release factor family. Post-translationally, methylated by PrmC. Methylation increases the termination efficiency of RF1.

Its subcellular location is the cytoplasm. In terms of biological role, peptide chain release factor 1 directs the termination of translation in response to the peptide chain termination codons UAG and UAA. The polypeptide is Peptide chain release factor 1 (Blochmanniella pennsylvanica (strain BPEN)).